We begin with the raw amino-acid sequence, 249 residues long: Uridylate kinase (249 aa).

ATP is bound at residue 22–25; the sequence is KISG. Positions 30–35 are involved in allosteric activation by GTP; sequence GTQGFG. Gly64 lines the UMP pocket. ATP-binding residues include Gly65 and Arg69. UMP-binding positions include Asp84 and 145-152; that span reads TGNPYFTT. ATP-binding residues include Asn173, Tyr179, and Asp182.

It belongs to the UMP kinase family. As to quaternary structure, homohexamer.

Its subcellular location is the cytoplasm. It carries out the reaction UMP + ATP = UDP + ADP. The protein operates within pyrimidine metabolism; CTP biosynthesis via de novo pathway; UDP from UMP (UMPK route): step 1/1. Its activity is regulated as follows. Allosterically activated by GTP. Inhibited by UTP. Its function is as follows. Catalyzes the reversible phosphorylation of UMP to UDP. The chain is Uridylate kinase from Ruegeria sp. (strain TM1040) (Silicibacter sp.).